The sequence spans 313 residues: Intelectin-like protein (313 aa).

The region spanning Thr33 to Cys251 is the Fibrinogen C-terminal domain. The Ca(2+) site is built by His86, Glu87, Asn89, Gly92, Gly97, Asp98, and Asp133. 3 cysteine pairs are disulfide-bonded: Cys94-Cys280, Cys199-Cys259, and Cys251-Cys265. Residues Asn260, Glu262, Glu274, and Asp282 each contribute to the Ca(2+) site. A carbohydrate-binding positions include Glu262–His263 and Glu274.

As to quaternary structure, monomer, homodimer, homotrimer and homotetramer. Mostly monomeric or dimeric.

It localises to the secreted. Its function is as follows. Binds mannan, mannose and, to a lesser degree, D-lactose, N-acetylgalactosamine, N-acetylglucosamine and beta-D-glucose. In Alligator mississippiensis (American alligator), this protein is Intelectin-like protein.